The primary structure comprises 165 residues: SsrA-binding protein (165 aa).

A disordered region spans residues 141–165 (EDRRHAIAERETKREMDREISRRRR).

The protein belongs to the SmpB family.

The protein resides in the cytoplasm. Required for rescue of stalled ribosomes mediated by trans-translation. Binds to transfer-messenger RNA (tmRNA), required for stable association of tmRNA with ribosomes. tmRNA and SmpB together mimic tRNA shape, replacing the anticodon stem-loop with SmpB. tmRNA is encoded by the ssrA gene; the 2 termini fold to resemble tRNA(Ala) and it encodes a 'tag peptide', a short internal open reading frame. During trans-translation Ala-aminoacylated tmRNA acts like a tRNA, entering the A-site of stalled ribosomes, displacing the stalled mRNA. The ribosome then switches to translate the ORF on the tmRNA; the nascent peptide is terminated with the 'tag peptide' encoded by the tmRNA and targeted for degradation. The ribosome is freed to recommence translation, which seems to be the essential function of trans-translation. In Anaeromyxobacter sp. (strain Fw109-5), this protein is SsrA-binding protein.